We begin with the raw amino-acid sequence, 665 residues long: Protein phosphatase 1 regulatory subunit 21 (665 aa).

Coiled-coil stretches lie at residues 1–84 (MTDL…SESK), 125–206 (LEAQ…RKYQ), 426–477 (ESRE…EAQV), and 586–627 (KRLA…EDQL).

In terms of assembly, component of the FERRY complex.

It is found in the early endosome. Its function is as follows. Component of the FERRY complex (Five-subunit Endosomal Rab5 and RNA/ribosome intermediary). The FERRY complex directly interacts with mRNAs and RAB5A, and functions as a RAB5A effector involved in the localization and the distribution of specific mRNAs most likely by mediating their endosomal transport. The complex recruits mRNAs and ribosomes to early endosomes through direct mRNA-interaction. Putative regulator of protein phosphatase 1 (PP1) activity. May play a role in the endosomal sorting process or in endosome maturation pathway. This chain is Protein phosphatase 1 regulatory subunit 21 (ppp1r21), found in Danio rerio (Zebrafish).